A 700-amino-acid chain; its full sequence is Polyphosphate kinase (700 aa).

ATP is bound at residue N45. Residues R373 and R403 each contribute to the Mg(2+) site. Positions 428-462 (PGMKIHAKLLLITRREEQGFVRYAHIGTGNFHERT) constitute a PLD phosphodiesterase 1 domain. H433 functions as the Phosphohistidine intermediate in the catalytic mechanism. Residues Y466, R562, and H590 each coordinate ATP. The PLD phosphodiesterase 2 domain occupies 585 to 615 (DRFLEHPRVLVVHNDGDPQVFISSADWMERN).

It belongs to the polyphosphate kinase 1 (PPK1) family. The cofactor is Mg(2+). In terms of processing, an intermediate of this reaction is the autophosphorylated ppk in which a phosphate is covalently linked to a histidine residue through a N-P bond.

The catalysed reaction is [phosphate](n) + ATP = [phosphate](n+1) + ADP. Its function is as follows. Catalyzes the reversible transfer of the terminal phosphate of ATP to form a long-chain polyphosphate (polyP). In Vibrio vulnificus (strain YJ016), this protein is Polyphosphate kinase.